A 294-amino-acid polypeptide reads, in one-letter code: Zinc finger protein 346 (294 aa).

Met-1 carries the N-acetylmethionine modification. The segment covering 1-19 (MECPAPDATDAADPGEAGP) has biased composition (low complexity). Residues 1 to 35 (MECPAPDATDAADPGEAGPYKGSEEPEGREPDGVR) form a disordered region. A compositionally biased stretch (basic and acidic residues) spans 22–35 (GSEEPEGREPDGVR). Residues 70-104 (FTSTQCKVCCAMLISESQKLAHYQSKKHANKVKRY) form a Matrin-type 1 zinc finger. Cys-75, Cys-78, His-91, and His-97 together coordinate Zn(2+). Residue Lys-114 forms a Glycyl lysine isopeptide (Lys-Gly) (interchain with G-Cter in SUMO2) linkage. The Matrin-type 2 zinc-finger motif lies at 131–165 (DKNHCCPICNMTFSSPAVAQSHYLGKTHAKSLKLK). Residues Cys-136, Cys-139, His-152, and His-158 each contribute to the Zn(2+) site. Lys-170 is covalently cross-linked (Glycyl lysine isopeptide (Lys-Gly) (interchain with G-Cter in SUMO2)). Matrin-type zinc fingers lie at residues 182-216 (DPDKFCSLCHSTFNDPAMAQQHYMGKRHRKQETKL) and 236-270 (GKGYPCKTCKIVLNSIEQYQAHVSGFKHKNQSPKT). The interval 269 to 294 (KTLVTLGSQTPVQTQPTPKDSSTVQD) is disordered.

Forms a heteromeric complex with XPO5 and ILF3. Found in a nuclear export complex with XPO5, RAN, ILF3, ZNF346 and double-stranded RNA. Interacts with XPO5. Interacts with ILF3 in an RNA-independent manner. Expressed in all tissues tested, including heart, brain, spleen, lung, liver, muscle, kidney and testis. Exogenous expression induced apoptosis.

It is found in the nucleus. The protein localises to the nucleolus. The protein resides in the cytoplasm. Binds with low affinity to dsDNA and ssRNA, and with high affinity to dsRNA, with no detectable sequence specificity. May bind to specific miRNA hairpins. In Mus musculus (Mouse), this protein is Zinc finger protein 346 (Znf346).